Consider the following 20-residue polypeptide: 23 kDa cell wall protein (20 aa).

It is found in the secreted. Its subcellular location is the cell wall. This chain is 23 kDa cell wall protein, found in Arabidopsis thaliana (Mouse-ear cress).